The primary structure comprises 455 residues: Chromosomal replication initiator protein DnaA 2 (455 aa).

The segment at 1-95 is domain I, interacts with DnaA modulators; that stretch reads MLTCNDCSTW…KRSSPLVTPS (95 aa). The domain II stretch occupies residues 96-112; that stretch reads IAKPATEVSEENKDFQL. Residues 113–328 form a domain III, AAA+ region region; that stretch reads KLNGAYRFDN…GAINKLTAYC (216 aa). ATP is bound by residues G157, G159, K160, and T161. Residues 329-455 form a domain IV, binds dsDNA region; that stretch reads LLFNKPLTET…IAIDSPQHFV (127 aa).

It belongs to the DnaA family. Oligomerizes as a right-handed, spiral filament on DNA at oriC.

It localises to the cytoplasm. Functionally, plays an essential role in the initiation and regulation of chromosomal replication. ATP-DnaA binds to the origin of replication (oriC) to initiate formation of the DNA replication initiation complex once per cell cycle. Binds the DnaA box (a 9 base pair repeat at the origin) and separates the double-stranded (ds)DNA. Forms a right-handed helical filament on oriC DNA; dsDNA binds to the exterior of the filament while single-stranded (ss)DNA is stabiized in the filament's interior. The ATP-DnaA-oriC complex binds and stabilizes one strand of the AT-rich DNA unwinding element (DUE), permitting loading of DNA polymerase. After initiation quickly degrades to an ADP-DnaA complex that is not apt for DNA replication. Binds acidic phospholipids. The protein is Chromosomal replication initiator protein DnaA 2 of Chlamydia trachomatis serovar D (strain ATCC VR-885 / DSM 19411 / UW-3/Cx).